We begin with the raw amino-acid sequence, 131 residues long: Holo-[acyl-carrier-protein] synthase (131 aa).

The Mg(2+) site is built by aspartate 8 and glutamate 59.

This sequence belongs to the P-Pant transferase superfamily. AcpS family. Mg(2+) is required as a cofactor.

Its subcellular location is the cytoplasm. It carries out the reaction apo-[ACP] + CoA = holo-[ACP] + adenosine 3',5'-bisphosphate + H(+). Its function is as follows. Transfers the 4'-phosphopantetheine moiety from coenzyme A to a Ser of acyl-carrier-protein. This is Holo-[acyl-carrier-protein] synthase from Rickettsia felis (strain ATCC VR-1525 / URRWXCal2) (Rickettsia azadi).